Here is a 454-residue protein sequence, read N- to C-terminus: Bifunctional protein GlmU (454 aa).

The pyrophosphorylase stretch occupies residues 1–226 (MALNVVILAA…AVEVEGANNR (226 aa)). UDP-N-acetyl-alpha-D-glucosamine contacts are provided by residues 8–11 (LAAG), K22, Q73, 78–79 (GT), 100–102 (YGD), G137, E151, N166, and N224. Residue D102 coordinates Mg(2+). Residue N224 coordinates Mg(2+). Residues 227–247 (VQLAQLERAYQARAAEKLMLE) are linker. The segment at 248–454 (GANLRDPARI…GWARPVKKAK (207 aa)) is N-acetyltransferase. Residues R330 and K348 each coordinate UDP-N-acetyl-alpha-D-glucosamine. H360 serves as the catalytic Proton acceptor. 2 residues coordinate UDP-N-acetyl-alpha-D-glucosamine: Y363 and N374. Residues A377, 383–384 (NY), S402, A420, and R437 contribute to the acetyl-CoA site.

The protein in the N-terminal section; belongs to the N-acetylglucosamine-1-phosphate uridyltransferase family. In the C-terminal section; belongs to the transferase hexapeptide repeat family. Homotrimer. The cofactor is Mg(2+).

It localises to the cytoplasm. The catalysed reaction is alpha-D-glucosamine 1-phosphate + acetyl-CoA = N-acetyl-alpha-D-glucosamine 1-phosphate + CoA + H(+). The enzyme catalyses N-acetyl-alpha-D-glucosamine 1-phosphate + UTP + H(+) = UDP-N-acetyl-alpha-D-glucosamine + diphosphate. It participates in nucleotide-sugar biosynthesis; UDP-N-acetyl-alpha-D-glucosamine biosynthesis; N-acetyl-alpha-D-glucosamine 1-phosphate from alpha-D-glucosamine 6-phosphate (route II): step 2/2. Its pathway is nucleotide-sugar biosynthesis; UDP-N-acetyl-alpha-D-glucosamine biosynthesis; UDP-N-acetyl-alpha-D-glucosamine from N-acetyl-alpha-D-glucosamine 1-phosphate: step 1/1. It functions in the pathway bacterial outer membrane biogenesis; LPS lipid A biosynthesis. Catalyzes the last two sequential reactions in the de novo biosynthetic pathway for UDP-N-acetylglucosamine (UDP-GlcNAc). The C-terminal domain catalyzes the transfer of acetyl group from acetyl coenzyme A to glucosamine-1-phosphate (GlcN-1-P) to produce N-acetylglucosamine-1-phosphate (GlcNAc-1-P), which is converted into UDP-GlcNAc by the transfer of uridine 5-monophosphate (from uridine 5-triphosphate), a reaction catalyzed by the N-terminal domain. In Shewanella piezotolerans (strain WP3 / JCM 13877), this protein is Bifunctional protein GlmU.